The sequence spans 282 residues: Heterogeneous nuclear ribonucleoprotein C (282 aa).

The region spanning 17–88 (SRVFIGNLNT…QVLDINLAAE (72 aa)) is the RRM domain. Disordered stretches follow at residues 131-177 (APPP…RLKG) and 208-282 (QSKQ…EEDS). The Nuclear localization signal motif lies at 141-147 (PSKRQRV). A compositionally biased stretch (low complexity) spans 161 to 172 (SKSGQRGGSSKS). A coiled-coil region spans residues 177–217 (GDDLQAIKKELSQIKQRVDSLLENLERIERDQSKQDTKLDD). 2 stretches are compositionally biased toward basic and acidic residues: residues 208-217 (QSKQDTKLDD) and 224-235 (LKKEETGVKLIE). 2 stretches are compositionally biased toward acidic residues: residues 236–257 (ETGD…EDTL) and 265–282 (KETE…EEDS).

This sequence belongs to the RRM HNRPC family. RALY subfamily. As to quaternary structure, tetramer.

It is found in the nucleus. Its function is as follows. Binds pre-mRNA and nucleates the assembly of 40S hnRNP particles. Interacts with poly-U tracts in the 3'-UTR or 5'-UTR of mRNA and modulates the stability and the level of translation of bound mRNA molecules. Single HNRNPC tetramers bind 230-240 nucleotides. Trimers of HNRNPC tetramers bind 700 nucleotides. May play a role in the early steps of spliceosome assembly and pre-mRNA splicing. N6-methyladenosine (m6A) has been shown to alter the local structure in mRNAs and long non-coding RNAs (lncRNAs) via a mechanism named 'm(6)A-switch', facilitating binding of HNRNPC, leading to regulation of mRNA splicing. In Xenopus laevis (African clawed frog), this protein is Heterogeneous nuclear ribonucleoprotein C (hnrnpc).